We begin with the raw amino-acid sequence, 150 residues long: Large ribosomal subunit protein bL9 (150 aa).

This sequence belongs to the bacterial ribosomal protein bL9 family.

In terms of biological role, binds to the 23S rRNA. The chain is Large ribosomal subunit protein bL9 from Leuconostoc mesenteroides subsp. mesenteroides (strain ATCC 8293 / DSM 20343 / BCRC 11652 / CCM 1803 / JCM 6124 / NCDO 523 / NBRC 100496 / NCIMB 8023 / NCTC 12954 / NRRL B-1118 / 37Y).